Reading from the N-terminus, the 348-residue chain is Uroporphyrinogen decarboxylase (348 aa).

Residues 27-31 (RQAGR), Phe46, Asp76, Tyr152, Ser207, and His320 each bind substrate.

The protein belongs to the uroporphyrinogen decarboxylase family. Homodimer.

Its subcellular location is the cytoplasm. The enzyme catalyses uroporphyrinogen III + 4 H(+) = coproporphyrinogen III + 4 CO2. It functions in the pathway porphyrin-containing compound metabolism; protoporphyrin-IX biosynthesis; coproporphyrinogen-III from 5-aminolevulinate: step 4/4. Its function is as follows. Catalyzes the decarboxylation of four acetate groups of uroporphyrinogen-III to yield coproporphyrinogen-III. The protein is Uroporphyrinogen decarboxylase of Bacillus cytotoxicus (strain DSM 22905 / CIP 110041 / 391-98 / NVH 391-98).